A 1476-amino-acid polypeptide reads, in one-letter code: MEEDKTFQSIRISENNNNNNNNNNNNNNNNNNNLNNNNDNDYDYDSINNIEEKFENVSKELEGQSIKFREIDGGKNNNNHDIELGERKPENEEDFKLRQYFEDSQRQKMLINHKPKKMGVSIKNLTVVGQGADNSVIVDNSTPFKALGKLLNPFNYFKKDKNKINTFNILNDINAFIEDGKMLLVLGRPGAGCSTLLRVIANQRESYISVDGDVTYGNIAASDWSKYRGETLYTGEEDIHHPTLTVRETLDFTLKLKTPGNRLPEESKRNFRTKIYELLVSMYGLVNQGDTMVGNEFVRGLSGGERKRITITEAMVSGSSITCWDCSTRGLDAASAYDYAKSLRIMSDTLDKTTIASFYQASDSIYNLFDKVIVLDKGRCIYFGPIGLAKQYFLDLGFDCEPRKSTPDFLTGITNPQERIVKVGFEGRVPETSVDLEDAWKKSQLFQSMKHAQLEYEKQVEQQKPSVDFKEQVLNEKSRTTSKNSEYSSSFYAQTIALTQRQLSLTWGDKFTLTSRFLTILVLSFIFGGIYFQQPLTTDGLFTRGGAIFTSIIFNCILTQGELHGALSGRRILQKHKSYALYRPSAYFVSQILIDIPFILVQVFLHSFIVYFMYGFEYRADKFFIFCFTLVGVSLSSASLFRGFANFTPSLFTAQNLMNFVFIFEVNYFGYSQTPDKMHSWFKWTYYINPLAYAFKSLMINEFKGLDFSCLDSAIPFDHFNNSTYSDMSHRICAVPGSIEGSLSVKGENYLWDALQINSDHRALNVVVIFLFWLFYIGLNLFAVEYFDWTSGGYTHKVYKRGKAPKLNDVEEERNQNQIVKKATDNMKDTLKMRGGLFSWKSISYTVPVAGTNKLLLDDIMGWIKPGQMTALMGSSGAGKTTLLDVLAKRKTMGTVTGESLLNGKQLEIDFERITGYVEQMDVHNPGLTVREALRFSAKLRQEPWVPLKDKYQYVEHVLEMMEMKHLGDALIGTLETGVGISVEERKRLTIGVELVAKPQILFLDEPTSGLDAQSSYNIIKFIRKLADAGMPLVCTIHQPSSVLFEHFDRILLLARGGKTVYFGDIGDKSKTLTSYFERHGVRPCTESENPAEYILEATGAGIHGKTDVNWPEAWKQSSEYQNVVNELDLLRTKEELGKYILDSDLQVDGKQAPPREFANGFLTQFIEVYKRLNIIYYRDVFYTMGSFAQSAVSGLVIGFTFYDLKNSSSDQQQRIFMSWEAMILGVLLIYLVLPMFFIQKEYFKRDTASKYYSWHAFSLSMIAVEIPYVVLSSTLFFIATYWTSGIDSTASANFYYWLMHTMFSVYIVSFAQALGAACVNIAISIAALPIVLFYLFLLCGVQIPPPAMSSFYQDWLYHLNPAKYFLEGLITTVLKPIEVLCTDVDLIKFTAPSGTDCQTYSAPFLQQATGYVVPLSNTTNECGYCIYSSGSDYFETSLGWDYGHRWRNFGIIVAYWGSSILAVLFFVYLTQKPRR.

Disordered regions lie at residues 13–45 (SENN…YDYD) and 68–91 (FREI…KPEN). Residues 14–67 (ENNNNNNNNNNNNNNNNNNNLNNNNDNDYDYDSINNIEEKFENVSKELEGQSIK) adopt a coiled-coil conformation. Over residues 15 to 39 (NNNNNNNNNNNNNNNNNNNLNNNND) the composition is skewed to low complexity. In terms of domain architecture, ABC transporter 1 spans 151-402 (LNPFNYFKKD…FLDLGFDCEP (252 aa)). Positions 507–751 (WGDKFTLTSR…SLSVKGENYL (245 aa)) constitute an ABC transmembrane type-2 1 domain. A run of 5 helical transmembrane segments spans residues 517-537 (FLTI…QPLT), 547-567 (AIFT…HGAL), 592-612 (ILID…IVYF), 623-643 (FFIF…LFRG), and 764-784 (LNVV…LFAV). Residues 838–1082 (FSWKSISYTV…LTSYFERHGV (245 aa)) form the ABC transporter 2 domain. 874-881 (GSSGAGKT) is a binding site for ATP. The next 6 membrane-spanning stretches (helical) occupy residues 1182–1202 (FYTM…GFTF), 1219–1239 (SWEA…MFFI), 1260–1280 (LSMI…FFIA), 1298–1318 (WLMH…LGAA), 1322–1342 (IAIS…LCGV), and 1450–1470 (FGII…FVYL). The 224-residue stretch at 1182-1405 (FYTMGSFAQS…TDCQTYSAPF (224 aa)) folds into the ABC transmembrane type-2 2 domain.

Belongs to the ABC transporter superfamily. ABCG family. PDR (TC 3.A.1.205) subfamily.

It localises to the membrane. The chain is ABC transporter G family member 17 (abcG17-1) from Dictyostelium discoideum (Social amoeba).